The primary structure comprises 256 residues: Homeobox protein goosecoid (256 aa).

A DNA-binding region (homeobox) is located at residues 160 to 219; the sequence is KRRHRTIFTDEQLEALENLFQETKYPDVGTREQLARKVHLREEKVEVWFKNRRAKWRRQK. The segment at 213 to 256 is disordered; it reads AKWRRQKRSSSEESENAEKWNKTSSKASPEKREEEGKSDLDSDS. Positions 240-256 are enriched in basic and acidic residues; that stretch reads SPEKREEEGKSDLDSDS.

It belongs to the paired homeobox family. Bicoid subfamily. As to expression, in early gastrulation, expressed in the dorsal lip. In later stages of development found in head, limbs and body wall. In the embryo, expressed in the postotic cranial neural crest cells, the frontonasal prominence, the first branchial arch and cleft, and specific regions of large joints.

The protein resides in the nucleus. Regulates chordin (CHRD). May play a role in spatial programing within discrete embryonic fields or lineage compartments during organogenesis. In concert with NKX3-2, plays a role in defining the structural components of the middle ear; required for the development of the entire tympanic ring. Goosecoid-expressing regions of the gastrulating mouse egg cylinder have organizer-like activity when transplanted into Xenopus embryos. Probably involved in the regulatory networks that define neural crest cell fate specification and determine mesoderm cell lineages in mammals. This is Homeobox protein goosecoid (Gsc) from Mus musculus (Mouse).